A 175-amino-acid chain; its full sequence is Small ribosomal subunit protein uS4 (175 aa).

The S4 RNA-binding domain maps to 105 to 169; it reads RRLQTIVYRQ…SPLADSLHPA (65 aa).

It belongs to the universal ribosomal protein uS4 family. Part of the 30S ribosomal subunit. Contacts protein S5. The interaction surface between S4 and S5 is involved in control of translational fidelity.

One of the primary rRNA binding proteins, it binds directly to 16S rRNA where it nucleates assembly of the body of the 30S subunit. Functionally, with S5 and S12 plays an important role in translational accuracy. In Haloquadratum walsbyi (strain DSM 16790 / HBSQ001), this protein is Small ribosomal subunit protein uS4.